Here is a 408-residue protein sequence, read N- to C-terminus: CinA-like protein (408 aa).

Belongs to the CinA family.

The protein is CinA-like protein of Thermotoga maritima (strain ATCC 43589 / DSM 3109 / JCM 10099 / NBRC 100826 / MSB8).